A 336-amino-acid chain; its full sequence is C4-dicarboxylate-binding periplasmic protein DctP (336 aa).

The N-terminal stretch at 1-31 is a signal peptide; the sequence is MTRLNTCTFIKQIVKMTSIAALLGASLNSWA. (S)-malate contacts are provided by Lys48, Lys101, Arg176, Asn216, Asn220, and Tyr243. Positions 48, 101, 176, 216, 220, and 243 each coordinate succinate.

It belongs to the bacterial solute-binding protein 7 family. The complex comprises the extracytoplasmic solute receptor protein DctP, and the two transmembrane proteins DctQ and DctM.

Its subcellular location is the periplasm. Part of the tripartite ATP-independent periplasmic (TRAP) transport system DctPQM involved in C4-dicarboxylates uptake. Required for the utilization of succinate, fumarate, L-malate and alpha-ketoglutarate. Binds succinate and malate. The chain is C4-dicarboxylate-binding periplasmic protein DctP from Shewanella loihica (strain ATCC BAA-1088 / PV-4).